Consider the following 151-residue polypeptide: Protein SprT-like (151 aa).

The 141-residue stretch at 7–147 folds into the SprT-like domain; the sequence is QKLTESISES…GKCKGKLHLH (141 aa). His-67 contacts Zn(2+). The active site involves Glu-68. Residue His-71 participates in Zn(2+) binding.

This sequence belongs to the SprT family. Requires Zn(2+) as cofactor.

The protein localises to the cytoplasm. In Staphylococcus carnosus (strain TM300), this protein is Protein SprT-like.